We begin with the raw amino-acid sequence, 80 residues long: Large ribosomal subunit protein bL31 (80 aa).

Zn(2+) contacts are provided by Cys-16, Cys-18, Cys-38, and Cys-41.

This sequence belongs to the bacterial ribosomal protein bL31 family. Type A subfamily. As to quaternary structure, part of the 50S ribosomal subunit. Requires Zn(2+) as cofactor.

In terms of biological role, binds the 23S rRNA. In Mycobacterium avium (strain 104), this protein is Large ribosomal subunit protein bL31.